The following is an 89-amino-acid chain: Small ribosomal subunit protein uS15 (89 aa).

This sequence belongs to the universal ribosomal protein uS15 family. As to quaternary structure, part of the 30S ribosomal subunit. Forms a bridge to the 50S subunit in the 70S ribosome, contacting the 23S rRNA.

Functionally, one of the primary rRNA binding proteins, it binds directly to 16S rRNA where it helps nucleate assembly of the platform of the 30S subunit by binding and bridging several RNA helices of the 16S rRNA. In terms of biological role, forms an intersubunit bridge (bridge B4) with the 23S rRNA of the 50S subunit in the ribosome. The chain is Small ribosomal subunit protein uS15 from Gluconobacter oxydans (strain 621H) (Gluconobacter suboxydans).